The chain runs to 1161 residues: MSKDFVHLHLHTQFSLLDGAIKIDELVKKAKEYGYKAVGMSDHGNLFGSYKFYKALKAEGIKPIIGMEAYFTTGSRFDRKTKTSEDNITDKYNHHLILIAKDDKGLKNLMKLSTLAYKEGFYYKPRIDYELLEKYGEGLIALTACLKGVPTYYASINEVKKAEEWVKKFKDIFGDDLYLELQANNIPEQEVANRNLIEIAKKYDVKLIATQDAHYLNPEDRYAHTVLMALQMKKTIHELSSGNFKCSNEDLHFAPPEYMWKKFEGKFEGWEKALLNTLEVMEKTADSFEIFENSTYLLPKYDVPPDKTLEEYLRELAYKGLRQRIERGQAKDTKEYWERLEYELEVINKMGFAGYFLIVQDFINWAKKNDIPVGPGRGSAGGSLVAYAIGITDVDPIKHGFLFERFLNPERVSMPDIDVDFCQDNREKVIEYVRNKYGHDNVAQIITYNVMKAKQTLRDVARAMGLPYSTADKLAKLIPQGDVQGTWLSLEEMYKTPVEELLQKYGEHRTDIEDNVKKFRQICEESPEIKQLVETALKLEGLTRHTSLHAAGVVIAPKPLSELVPLYYDKEGEVATQYDMVQLEELGLLKMDFLGLKTLTELKLMKELIKERHGVDINFLELPLDDPKVYKLLQEGKTTGVFQLESRGMKELLKKLKPDSFDDIVAVLALYRPGPLKSGLVDTYIKRKHGKEPVEYPFPELEPVLKETYGVIVYQEQVMKMSQILSGFTPGEADTLRKAIGKKKADLMAQMKDKFIQGAVERGYPEEKIRKLWEDIEKFASYSFNKSHSVAYGYISYWTAYVKAHYPAEFFAVKLTTEKNDNKFLNLIKDAKLFGFEILPPDINKSDVGFTIEGENRIRFGLARIKGVGEETAKIIVEARKKYKQFKGLADFINKTKNRKINKKVVEALVKAGAFDFTKKKRKELLAKVANSEKALMATQNSLFGAPKEEVEELDPLKLEKEVLGFYISGHPLDNYEKLLKNRYTPIEDLEEWDKESEAVLTGVITELKVKKTKNGDYMAVFNLVDKTGLIECVVFPGVYEEAKELIEEDRVVVVKGFLDEDLETENVKFVVKEVFSPEEFAKEMRNTLYIFLKREQALNGVAEKLKGIIENNRTEDGYNLVLTVDLGDYFVDLALPQDMKLKADRKVVEEIEKLGVKVII.

The protein belongs to the DNA polymerase type-C family. DnaE subfamily. In terms of assembly, DNA polymerase III contains a core (composed of alpha, epsilon and theta chains) that associates with a tau subunit. This core dimerizes to form the PolIII' complex. PolIII' associates with the gamma complex (composed of gamma, delta, delta', psi and chi chains) and with the beta chain to form the complete DNA polymerase III complex.

It is found in the cytoplasm. The catalysed reaction is DNA(n) + a 2'-deoxyribonucleoside 5'-triphosphate = DNA(n+1) + diphosphate. Its function is as follows. DNA polymerase III is a complex, multichain enzyme responsible for most of the replicative synthesis in bacteria. This DNA polymerase also exhibits 3' to 5' exonuclease activity. The alpha chain is the DNA polymerase. This Aquifex aeolicus (strain VF5) protein is DNA polymerase III subunit alpha (dnaE).